The sequence spans 456 residues: Chromosomal replication initiator protein DnaA 1 (456 aa).

Residues 1 to 68 form a domain I, interacts with DnaA modulators region; that stretch reads MRAWEEFLLL…KASLINNNGK (68 aa). The domain II stretch occupies residues 68-101; that stretch reads KPIRVRVTSLDKSTPFKETQIQQEKTAYFTMKYG. The tract at residues 102 to 320 is domain III, AAA+ region; it reads DIDPNMSFAN…HALTTLAKRV (219 aa). ATP-binding residues include serine 150, glycine 152, lysine 153, and threonine 154. Residues 321–456 are domain IV, binds dsDNA; that stretch reads AYKKLSHQML…AYQSLDFIED (136 aa).

It belongs to the DnaA family. As to quaternary structure, oligomerizes as a right-handed, spiral filament on DNA at oriC.

It is found in the cytoplasm. In terms of biological role, plays an essential role in the initiation and regulation of chromosomal replication. ATP-DnaA binds to the origin of replication (oriC) to initiate formation of the DNA replication initiation complex once per cell cycle. Binds the DnaA box (a 9 base pair repeat at the origin) and separates the double-stranded (ds)DNA. Forms a right-handed helical filament on oriC DNA; dsDNA binds to the exterior of the filament while single-stranded (ss)DNA is stabiized in the filament's interior. The ATP-DnaA-oriC complex binds and stabilizes one strand of the AT-rich DNA unwinding element (DUE), permitting loading of DNA polymerase. After initiation quickly degrades to an ADP-DnaA complex that is not apt for DNA replication. Binds acidic phospholipids. In Chlamydia trachomatis serovar D (strain ATCC VR-885 / DSM 19411 / UW-3/Cx), this protein is Chromosomal replication initiator protein DnaA 1.